Here is a 158-residue protein sequence, read N- to C-terminus: UPF0260 protein RHE_CH01262 (158 aa).

This sequence belongs to the UPF0260 family.

The sequence is that of UPF0260 protein RHE_CH01262 from Rhizobium etli (strain ATCC 51251 / DSM 11541 / JCM 21823 / NBRC 15573 / CFN 42).